The chain runs to 696 residues: Putative zinc metalloproteinase YIL108W (696 aa).

Residue lysine 245 forms a Glycyl lysine isopeptide (Lys-Gly) (interchain with G-Cter in ubiquitin) linkage. Histidine 318 serves as a coordination point for Zn(2+). Residue glutamate 319 is part of the active site. 2 residues coordinate Zn(2+): histidine 322 and histidine 328. Serine 361 carries the phosphoserine modification. Residues lysine 478, lysine 518, lysine 579, lysine 590, and lysine 596 each participate in a glycyl lysine isopeptide (Lys-Gly) (interchain with G-Cter in ubiquitin) cross-link. The Jacalin-type lectin domain occupies 522–695 (GIKSPLYGRS…VDAFGIIYGA (174 aa)).

It belongs to the peptidase M10B family. The cofactor is Zn(2+).

It is found in the cytoplasm. The protein is Putative zinc metalloproteinase YIL108W of Saccharomyces cerevisiae (strain ATCC 204508 / S288c) (Baker's yeast).